The following is a 62-amino-acid chain: MGESKSPQESSSEGETKRKFREALDRKMAQSSSGSDHKDGGGKQSRAHGPVASRREFRRKSG.

Over residues 1–13 the composition is skewed to polar residues; that stretch reads MGESKSPQESSSE. The tract at residues 1-62 is disordered; that stretch reads MGESKSPQES…SRREFRRKSG (62 aa). Over residues 14–28 the composition is skewed to basic and acidic residues; it reads GETKRKFREALDRKM.

This is an uncharacterized protein from Mycobacterium tuberculosis (strain ATCC 25618 / H37Rv).